A 460-amino-acid polypeptide reads, in one-letter code: MKNYAIILAAGKGTRMNSGLPKVLHKVSGLSMLEHVLKSVSALAPQKQLTVIGHQAEQVRAVLGDQLLTVVQEEQLGTGHAVMMAEEELSGLEGQTLVIAGDTPLIRGESLKALLDYHIREKNVATILTANAKDPFGYGRIIRNAAGEVVNIVEQKDANEAEQEVKEINTGTYIFDNKRLFEALKHLTTDNAQGEYYLTDVISIFKASQEKVGAYLLKDFDESLGVNDRLALAQAEVIMQERINKQHMLNGVTLQNPAATYIESSVEIAPDVLIEANVTLKGQTRIGSRSVITNGSYILDSRLGEGVVVSQSVIEGSVLADGVTVGPYAHIRPDSQLDECVHIGNFVEVKGSHLGANTKAGHLTYLGNAEIGSEVNIGAGSITVNYDGQRKYQTVIGDHAFIGSHSTLIAPVEVGENALTAAGSTIAQSVPADSVAIGRSRQVVKEGYAKRLPHHPDQPQ.

The tract at residues 1-229 is pyrophosphorylase; sequence MKNYAIILAA…FDESLGVNDR (229 aa). Residues 8-11, K22, Q72, and 77-78 each bind UDP-N-acetyl-alpha-D-glucosamine; these read LAAG and GT. D102 lines the Mg(2+) pocket. G139, E154, N169, and N227 together coordinate UDP-N-acetyl-alpha-D-glucosamine. N227 is a Mg(2+) binding site. Residues 230 to 250 are linker; it reads LALAQAEVIMQERINKQHMLN. Residues 251 to 460 form an N-acetyltransferase region; it reads GVTLQNPAAT…RLPHHPDQPQ (210 aa). Residues R332 and K350 each coordinate UDP-N-acetyl-alpha-D-glucosamine. The active-site Proton acceptor is H362. 2 residues coordinate UDP-N-acetyl-alpha-D-glucosamine: Y365 and N376. Acetyl-CoA contacts are provided by residues A379, 385–386, S404, A422, and R439; that span reads NY.

It in the N-terminal section; belongs to the N-acetylglucosamine-1-phosphate uridyltransferase family. In the C-terminal section; belongs to the transferase hexapeptide repeat family. In terms of assembly, homotrimer. Requires Mg(2+) as cofactor.

It localises to the cytoplasm. It carries out the reaction alpha-D-glucosamine 1-phosphate + acetyl-CoA = N-acetyl-alpha-D-glucosamine 1-phosphate + CoA + H(+). The enzyme catalyses N-acetyl-alpha-D-glucosamine 1-phosphate + UTP + H(+) = UDP-N-acetyl-alpha-D-glucosamine + diphosphate. Its pathway is nucleotide-sugar biosynthesis; UDP-N-acetyl-alpha-D-glucosamine biosynthesis; N-acetyl-alpha-D-glucosamine 1-phosphate from alpha-D-glucosamine 6-phosphate (route II): step 2/2. It functions in the pathway nucleotide-sugar biosynthesis; UDP-N-acetyl-alpha-D-glucosamine biosynthesis; UDP-N-acetyl-alpha-D-glucosamine from N-acetyl-alpha-D-glucosamine 1-phosphate: step 1/1. It participates in bacterial outer membrane biogenesis; LPS lipid A biosynthesis. Catalyzes the last two sequential reactions in the de novo biosynthetic pathway for UDP-N-acetylglucosamine (UDP-GlcNAc). The C-terminal domain catalyzes the transfer of acetyl group from acetyl coenzyme A to glucosamine-1-phosphate (GlcN-1-P) to produce N-acetylglucosamine-1-phosphate (GlcNAc-1-P), which is converted into UDP-GlcNAc by the transfer of uridine 5-monophosphate (from uridine 5-triphosphate), a reaction catalyzed by the N-terminal domain. This Streptococcus equi subsp. zooepidemicus (strain ATCC 35246 / C74-63) protein is Bifunctional protein GlmU.